The primary structure comprises 356 residues: Protein RecA (356 aa).

67 to 74 (GPESSGKT) serves as a coordination point for ATP.

It belongs to the RecA family.

It localises to the cytoplasm. Functionally, can catalyze the hydrolysis of ATP in the presence of single-stranded DNA, the ATP-dependent uptake of single-stranded DNA by duplex DNA, and the ATP-dependent hybridization of homologous single-stranded DNAs. It interacts with LexA causing its activation and leading to its autocatalytic cleavage. The sequence is that of Protein RecA from Yersinia pestis (strain Pestoides F).